A 582-amino-acid polypeptide reads, in one-letter code: Bifunctional lycopene cyclase/phytoene synthase (582 aa).

The tract at residues 1 to 261 (MNQNGTRLCY…VVLGLVGCDY (261 aa)) is lycopene beta-cyclase. 6 helical membrane-spanning segments follow: residues 34–54 (CTYTIPAASALTVLYYPFFTA), 59–79 (KICILITIAILATLPWDSYLI), 99–121 (IPIEEVFFFAIQTYITSLTYCIF), 142–162 (YVVATVILALMGGGTACLLLG), 170–190 (LILVWACPILLFQWMMSYPFL), and 242–262 (ALFFLVSNMMVVLGLVGCDYA). A phytoene synthase region spans residues 268–582 (YESLSQPASD…LLSALVYRLE (315 aa)).

It in the N-terminal section; belongs to the lycopene beta-cyclase family. In the C-terminal section; belongs to the phytoene/squalene synthase family.

Its subcellular location is the membrane. It catalyses the reaction all-trans-lycopene = gamma-carotene. The catalysed reaction is gamma-carotene = all-trans-beta-carotene. It carries out the reaction 2 (2E,6E,10E)-geranylgeranyl diphosphate = 15-cis-phytoene + 2 diphosphate. Its pathway is carotenoid biosynthesis; beta-carotene biosynthesis. The protein operates within carotenoid biosynthesis; phytoene biosynthesis; all-trans-phytoene from geranylgeranyl diphosphate: step 1/1. Bifunctional enzyme that catalyzes the reactions from geranylgeranyl diphosphate to phytoene (phytoene synthase) and lycopene to beta-carotene via the intermediate gamma-carotene (lycopene cyclase). The protein is Bifunctional lycopene cyclase/phytoene synthase of Aspergillus niger (strain ATCC MYA-4892 / CBS 513.88 / FGSC A1513).